A 252-amino-acid chain; its full sequence is Intraflagellar transport associated protein 2 (252 aa).

GTP is bound by residues 35–42 and 118–125; these read GPPKAGKT and WDVSGDKK.

This sequence belongs to the small GTPase superfamily. Rab family. As to quaternary structure, component of the IFT complex B composed of at least che-2, che-13, dyf-1, dyf-3, dyf-6, dyf-11, dyf-13, ift-20, ift-74, ift-81, ifta-2, osm-1, osm-5 and osm-6. In terms of tissue distribution, ciliated sensory neurons.

Its subcellular location is the cytoplasm. It localises to the cytoskeleton. The protein localises to the cilium axoneme. Component of the intraflagellar transport (IFT) complex B required for transport of proteins in the motile cilium. May be required for ciliary entrance and transport of specific ciliary cargo proteins such as che-3 which are related to motility. Regulates specific signaling activities in the cilia, such as the daf-2/insulin receptor-like transduction pathway. This chain is Intraflagellar transport associated protein 2, found in Caenorhabditis elegans.